Reading from the N-terminus, the 729-residue chain is Subtilisin-like protease SBT4.3 (729 aa).

A signal peptide spans 1–23 (MAKLSTPLYLICLAFIFTRDVSA). Residues 24-109 (NDYRQASSVY…VFPSKSHELT (86 aa)) constitute a propeptide, activation peptide. An Inhibitor I9 domain is found at 32-108 (VYIVYMGTLP…SVFPSKSHEL (77 aa)). An N-linked (GlcNAc...) asparagine glycan is attached at Asn82. A Peptidase S8 domain is found at 113–580 (SWDFVGFGEK…SGQINPTKAS (468 aa)). Active-site charge relay system residues include Asp139 and His196. Residues Asn275, Asn348, Asn359, and Asn363 are each glycosylated (N-linked (GlcNAc...) asparagine). The 87-residue stretch at 350-436 (TKFPIVYGQN…LGFEDYKSIK (87 aa)) folds into the PA domain. Ser521 acts as the Charge relay system in catalysis. Asn614, Asn642, and Asn656 each carry an N-linked (GlcNAc...) asparagine glycan.

Belongs to the peptidase S8 family. The C-terminal propeptide is autocleaved.

It localises to the secreted. The chain is Subtilisin-like protease SBT4.3 from Arabidopsis thaliana (Mouse-ear cress).